Here is a 429-residue protein sequence, read N- to C-terminus: UDP-N-acetylglucosamine 1-carboxyvinyltransferase (429 aa).

22–23 contributes to the phosphoenolpyruvate binding site; that stretch reads KN. Position 102 (Arg-102) interacts with UDP-N-acetyl-alpha-D-glucosamine. The active-site Proton donor is the Cys-126. Cys-126 carries the 2-(S-cysteinyl)pyruvic acid O-phosphothioketal modification. Residues 131–135, Asp-316, and Ile-338 each bind UDP-N-acetyl-alpha-D-glucosamine; that span reads RPVDL.

This sequence belongs to the EPSP synthase family. MurA subfamily.

The protein localises to the cytoplasm. The catalysed reaction is phosphoenolpyruvate + UDP-N-acetyl-alpha-D-glucosamine = UDP-N-acetyl-3-O-(1-carboxyvinyl)-alpha-D-glucosamine + phosphate. It participates in cell wall biogenesis; peptidoglycan biosynthesis. In terms of biological role, cell wall formation. Adds enolpyruvyl to UDP-N-acetylglucosamine. This Rhodopseudomonas palustris (strain HaA2) protein is UDP-N-acetylglucosamine 1-carboxyvinyltransferase.